Here is a 357-residue protein sequence, read N- to C-terminus: Acyl-coenzyme A:6-aminopenicillanic-acid-acyltransferase 40 kDa form (357 aa).

2 residues coordinate 6-aminopenicillanate: D121 and R310.

The protein belongs to the peptidase C45 family. The active form of the enzyme results from processing of the 40-kDa monomeric precursor to a heterodimer containing subunits of 11 and 29 kDa. Post-translationally, the pre-AAT protein is synthesized as 40 kDa precursor which is then self-processed into an 11 kDa (protein A) and a 29 kDa (protein B). The B protein carries AAT activity.

The protein localises to the peroxisome matrix. It catalyses the reaction isopenicillin N + phenylacetyl-CoA + H2O = penicillin G + L-2-aminoadipate + CoA + H(+). Its pathway is antibiotic biosynthesis; penicillin G biosynthesis; penicillin G from L-alpha-aminoadipate and L-cysteine and L-valine: step 3/3. Its function is as follows. Nonribosomal peptide synthetase; part of the gene cluster that mediates the biosynthesis of penicillin, the world's most important antibiotic. AatA catalyzes the exchange of the alpha-aminoadipyl side chain of isopenicillin N for phenylacetic acid to yield penicillin. This step occurs in the peroxisomal matrix and the penM and paaT transporters are involved in the isopenicillin N and phenylacetic acid import into the peroxisome, respectively. The penicillin biosynthesis occurs via 3 enzymatic steps, the first corresponding to the production of the tripeptide N-[(5S)-5-amino-5-carboxypentanoyl]-L-cysteinyl-D-valine (LLD-ACV or ACV) by the NRPS acvA. The tripeptide ACV is then cyclized to isopenicillin N (IPN) by the isopenicillin N synthase ipnA that forms the beta-lactam nucleus. Finally, the alpha-aminoadipyl side chain is exchanged for phenylacetic acid by the isopenicillin N acyltransferase penDE to yield penicillin in the peroxisomal matrix. This is Acyl-coenzyme A:6-aminopenicillanic-acid-acyltransferase 40 kDa form from Emericella nidulans (strain FGSC A4 / ATCC 38163 / CBS 112.46 / NRRL 194 / M139) (Aspergillus nidulans).